The following is a 425-amino-acid chain: Synaptotagmin-4 (425 aa).

Residues 1–16 are Vesicular-facing; sequence MAPITTSRVEFDEIPT. The helical transmembrane segment at 17–37 threads the bilayer; sequence VVGIFSAFGLVFTVSLFAWIC. At 38 to 425 the chain is on the cytoplasmic side; sequence CQRRSAKSNK…IAKWHMLCDG (388 aa). Positions 127-147 are disordered; sequence TETEKEANSPESLKSSTSLTS. Ser135 carries the phosphoserine; by MAPK8 modification. Over residues 137-146 the composition is skewed to low complexity; sequence ESLKSSTSLT. 2 C2 domains span residues 153-274 and 287-420; these read KLGT…MLMT and GRGE…AKWH. Residues Asp246, Ser249, and Asp252 each contribute to the Ca(2+) site.

It belongs to the synaptotagmin family. Interacts with KIF1A; the interaction increases in presence of calcium and decreases when SYT4 is phosphorylated at Ser-135. Ca(2+) serves as cofactor. Phosphorylation at Ser-135 by MAPK8/JNK1 reduces interaction with KIF1A and neuronal dense core vesicles mobility. As to expression, expressed in many regions of the nervous system but is undetectable in extra neural tissues.

The protein localises to the cytoplasmic vesicle. It is found in the secretory vesicle. It localises to the neuronal dense core vesicle membrane. Synaptotagmin family member which does not bind Ca(2+). Plays a role in dendrite formation by melanocytes. Its function is as follows. Synaptotagmin family member which does not bind Ca(2+). Involved in neuronal dense core vesicles (DCVs) mobility through its interaction with KIF1A. Upon increased neuronal activity, phosphorylation by MAPK8/JNK1 destabilizes the interaction with KIF1A and captures DCVs to synapses. Plays a role in dendrite formation by melanocytes. The chain is Synaptotagmin-4 (Syt4) from Mus musculus (Mouse).